The primary structure comprises 147 residues: Hemoglobin subunit beta-2 (147 aa).

The residue at position 2 (valine 2) is an N-acetylvaline. The 145-residue stretch at 3–147 folds into the Globin domain; it reads HLTDAEKSAV…VATALAHKYH (145 aa). The residue at position 18 (lysine 18) is an N6-succinyllysine. Tyrosine 42 bears the Phosphotyrosine mark. Residues serine 45, serine 51, and serine 53 each carry the phosphoserine modification. Position 60 is an N6-succinyllysine (lysine 60). Positions 64 and 93 each coordinate heme b. Arginine 105 bears the Asymmetric dimethylarginine mark. Residue threonine 124 is modified to Phosphothreonine.

The protein belongs to the globin family. Heterotetramer of two alpha chains and two beta chains. In terms of tissue distribution, red blood cells.

Involved in oxygen transport from the lung to the various peripheral tissues. In Mus musculus (Mouse), this protein is Hemoglobin subunit beta-2 (Hbb-b2).